The chain runs to 292 residues: Formamidopyrimidine-DNA glycosylase (292 aa).

Proline 2 acts as the Schiff-base intermediate with DNA in catalysis. Glutamate 3 serves as the catalytic Proton donor. The active-site Proton donor; for beta-elimination activity is the lysine 60. Histidine 109, arginine 128, and lysine 173 together coordinate DNA. The FPG-type zinc-finger motif lies at 258 to 292 (NVYRRTGKKCRQCKNLIERQKISGRSTHWCRKCQK). Catalysis depends on arginine 282, which acts as the Proton donor; for delta-elimination activity.

The protein belongs to the FPG family. In terms of assembly, monomer. It depends on Zn(2+) as a cofactor.

The enzyme catalyses Hydrolysis of DNA containing ring-opened 7-methylguanine residues, releasing 2,6-diamino-4-hydroxy-5-(N-methyl)formamidopyrimidine.. It carries out the reaction 2'-deoxyribonucleotide-(2'-deoxyribose 5'-phosphate)-2'-deoxyribonucleotide-DNA = a 3'-end 2'-deoxyribonucleotide-(2,3-dehydro-2,3-deoxyribose 5'-phosphate)-DNA + a 5'-end 5'-phospho-2'-deoxyribonucleoside-DNA + H(+). Involved in base excision repair of DNA damaged by oxidation or by mutagenic agents. Acts as a DNA glycosylase that recognizes and removes damaged bases. Has a preference for oxidized purines, such as 7,8-dihydro-8-oxoguanine (8-oxoG). Has AP (apurinic/apyrimidinic) lyase activity and introduces nicks in the DNA strand. Cleaves the DNA backbone by beta-delta elimination to generate a single-strand break at the site of the removed base with both 3'- and 5'-phosphates. This is Formamidopyrimidine-DNA glycosylase from Prochlorococcus marinus subsp. pastoris (strain CCMP1986 / NIES-2087 / MED4).